The following is a 128-amino-acid chain: Large ribosomal subunit protein bL12 (128 aa).

The protein belongs to the bacterial ribosomal protein bL12 family. Homodimer. Part of the ribosomal stalk of the 50S ribosomal subunit. Forms a multimeric L10(L12)X complex, where L10 forms an elongated spine to which 2 to 4 L12 dimers bind in a sequential fashion. Binds GTP-bound translation factors.

Its function is as follows. Forms part of the ribosomal stalk which helps the ribosome interact with GTP-bound translation factors. Is thus essential for accurate translation. This is Large ribosomal subunit protein bL12 from Rubrobacter xylanophilus (strain DSM 9941 / JCM 11954 / NBRC 16129 / PRD-1).